We begin with the raw amino-acid sequence, 129 residues long: Small ribosomal subunit protein uS11 (129 aa).

Belongs to the universal ribosomal protein uS11 family. In terms of assembly, part of the 30S ribosomal subunit. Interacts with proteins S7 and S18. Binds to IF-3.

Located on the platform of the 30S subunit, it bridges several disparate RNA helices of the 16S rRNA. Forms part of the Shine-Dalgarno cleft in the 70S ribosome. The sequence is that of Small ribosomal subunit protein uS11 from Dinoroseobacter shibae (strain DSM 16493 / NCIMB 14021 / DFL 12).